A 603-amino-acid chain; its full sequence is Penicillin-binding protein activator LpoA (603 aa).

A signal peptide spans 1-24; it reads MINHKRLSVPRILTPVALAITLAA. The N-palmitoyl cysteine moiety is linked to residue Cys25. Residue Cys25 is the site of S-diacylglycerol cysteine attachment.

Belongs to the LpoA family. Interacts with PBP1a.

It is found in the cell outer membrane. In terms of biological role, regulator of peptidoglycan synthesis that is essential for the function of penicillin-binding protein 1A (PBP1a). This is Penicillin-binding protein activator LpoA from Vibrio antiquarius (strain Ex25).